Here is a 206-residue protein sequence, read N- to C-terminus: Putative archaetidylserine decarboxylase proenzyme (206 aa).

Catalysis depends on S172, which acts as the Schiff-base intermediate with substrate; via pyruvic acid. S172 bears the Pyruvic acid (Ser); by autocatalysis mark.

This sequence belongs to the phosphatidylserine decarboxylase family. PSD-A subfamily. As to quaternary structure, heterodimer of a large membrane-associated beta subunit and a small pyruvoyl-containing alpha subunit. It depends on pyruvate as a cofactor. In terms of processing, is synthesized initially as an inactive proenzyme. Formation of the active enzyme involves a self-maturation process in which the active site pyruvoyl group is generated from an internal serine residue via an autocatalytic post-translational modification. Two non-identical subunits are generated from the proenzyme in this reaction, and the pyruvate is formed at the N-terminus of the alpha chain, which is derived from the carboxyl end of the proenzyme. The post-translation cleavage follows an unusual pathway, termed non-hydrolytic serinolysis, in which the side chain hydroxyl group of the serine supplies its oxygen atom to form the C-terminus of the beta chain, while the remainder of the serine residue undergoes an oxidative deamination to produce ammonia and the pyruvoyl prosthetic group on the alpha chain.

It is found in the cell membrane. The enzyme catalyses archaetidylserine + H(+) = archaetidylethanolamine + CO2. In terms of biological role, catalyzes the formation of archaetidylethanolamine (PtdEtn) from archaetidylserine (PtdSer). This chain is Putative archaetidylserine decarboxylase proenzyme, found in Methanocaldococcus jannaschii (strain ATCC 43067 / DSM 2661 / JAL-1 / JCM 10045 / NBRC 100440) (Methanococcus jannaschii).